Consider the following 184-residue polypeptide: Mitochondrial import inner membrane translocase subunit TIM22 (184 aa).

The interval 1–26 (MSLWGVYTGPQPPKKPLQEMTQEEQA) is disordered. 2 disulfides stabilise this stretch: Cys40/Cys118 and Cys137/Cys156. Helical transmembrane passes span 45–65 (VMAG…MASM) and 151–171 (AALV…MYLN).

Belongs to the Tim17/Tim22/Tim23 family. In terms of assembly, component of the TIM22 complex, whose core is composed of TIM22 and TIM54, associated with the 70 kDa heterohexamer composed of TIM9 and TIM10 (or TIM8 and TIM13).

Its subcellular location is the mitochondrion inner membrane. Essential core component of the TIM22 complex, a complex that mediates the import and insertion of multi-pass transmembrane proteins into the mitochondrial inner membrane. In the TIM22 complex, it constitutes the voltage-activated and signal-gated channel. Forms a twin-pore translocase that uses the membrane potential as external driving force in 2 voltage-dependent steps. The protein is Mitochondrial import inner membrane translocase subunit TIM22 of Candida albicans (strain SC5314 / ATCC MYA-2876) (Yeast).